Consider the following 926-residue polypeptide: Sperm-associated antigen 1 (926 aa).

TPR repeat units follow at residues 209 to 242 (ATREKEKGNEAFNSGDYEEAVMYYTRSISALPTV), 244 to 275 (AYNNRAQAEIKLQNWNSAFQDCEKVLELEPGN), and 276 to 309 (VKALLRRATTYKHQNKLREATEDLSKVLDVEPDN). The segment at 318–452 (EVERDLKNSE…ENPAGLKSQG (135 aa)) is disordered. Serine 347 and serine 354 each carry phosphoserine. Residues 352 to 368 (GKSGRKHEDGGGDKKPA) are compositionally biased toward basic and acidic residues. Positions 369 to 379 (EPAGAARAAQP) are enriched in low complexity. Serine 423 carries the phosphoserine modification. Residues 428–441 (AGGGATGHPGGGQG) are compositionally biased toward gly residues. TPR repeat units lie at residues 445 to 478 (PAGLKSQGNELFRSGQFAEAAGKYSAAIALLEPA), 487 to 520 (SILYSNRAACYLKEGNCSGCIQDCNRALELHPFS), 522 to 554 (KPLLRRAMAYETLEQYGKAYVDYKTVLQIDCGL), 623 to 656 (FKALKEEGNQCVNDKNYKDALSKYSECLKINNKE), 657 to 690 (CAIYTNRALCYLKLCQFEEAKQDCDQALQLADGN), and 692 to 724 (KAFYRRALAHKGLKNYQKSLIDLNKVILLDPSI). 2 stretches are compositionally biased toward basic and acidic residues: residues 758 to 769 (IQEVNEGKEEPG) and 784 to 799 (KGGKSSRSPEDPEKLP). The tract at residues 758–801 (IQEVNEGKEEPGRPAGEVSMGCLASEKGGKSSRSPEDPEKLPIA) is disordered. Residue 781 to 788 (ASEKGGKS) participates in GTP binding. At serine 791 the chain carries Phosphoserine.

As to expression, present in most tissues, including lung, with the strongest expression in brain, colon, kidney, and testis. In sperm and testis, detected in particular in pachytene primary spermatocytes. Up-regulated in pancreatic tumor tissues and not in normal pancreatic tissue.

It is found in the cytoplasm. It localises to the dynein axonemal particle. In terms of biological role, may play a role in the cytoplasmic assembly of the ciliary dynein arms. May play a role in fertilization. Binds GTP and has GTPase activity. The protein is Sperm-associated antigen 1 (SPAG1) of Homo sapiens (Human).